The following is a 370-amino-acid chain: Putative agmatine deiminase (370 aa).

Catalysis depends on Cys-361, which acts as the Amidino-cysteine intermediate.

It belongs to the agmatine deiminase family.

The catalysed reaction is agmatine + H2O = N-carbamoylputrescine + NH4(+). This chain is Putative agmatine deiminase, found in Shewanella baltica (strain OS223).